Reading from the N-terminus, the 170-residue chain is CFA/I fimbrial subunit B (170 aa).

Positions 1–23 (MKFKKTIGAMALTTMFVAVSASA) are cleaved as a signal peptide.

It belongs to the fimbrial CS1 protein family. In terms of assembly, CFA/I fimbriae are rather rigid, thread-like filaments of 0.5-1 micrometer, with an apparent axial hole, and a diameter of 7 nanometers. A single CFA/I fimbria consists of about 100 identical protein subunits.

The protein localises to the fimbrium. Fimbriae (also called pili), polar filaments radiating from the surface of the bacterium to a length of 0.5-1.5 micrometers and numbering 100-300 per cell, enable bacteria to colonize the epithelium of specific host organs. This chain is CFA/I fimbrial subunit B (cfaB), found in Escherichia coli O78:H11 (strain H10407 / ETEC).